The sequence spans 48 residues: ATP synthase protein 8 (48 aa).

M1 bears the N-formylmethionine mark. Residues 1–12 are Mitochondrial intermembrane-facing; it reads MPQLIPFFFLNQ. Residues 13 to 33 form a helical membrane-spanning segment; it reads LFYGYLALFALLVLVSWVILP. The Mitochondrial matrix segment spans residues 34–48; the sequence is YLLQLQIVRLLITKL.

F-type ATP synthases have 2 components, the catalytic core F(1) and the membrane-embedded component F(0), linked together by a central stalk and a peripheral stalk. The central stalk, also called rotor shaft, is often seen as part of F(1). The peripheral stalk is seen as part of F(0). F(0) contains the membrane channel next to the rotor. F-type ATP synthases form dimers but each monomer functions independently in ATP generation. The dimer consists of 18 different polypeptides: ATP1 (subunit alpha, part of F(1), 3 molecules per monomer), ATP2 (subunit beta, part of F(1), 3 molecules per monomer), ATP3 (subunit gamma, part of the central stalk), ATP4 (subunit b, part of the peripheral stalk), ATP5/OSCP (subunit 5/OSCP, part of the peripheral stalk), ATP6 (subunit a, part of the peripheral stalk), ATP7 (subunit d, part of the peripheral stalk), ATP8 (subunit 8, part of the peripheral stalk), OLI1 (subunit c, part of the rotor, 10 molecules per monomer), ATP14 (subunit h, part of the peripheral stalk), ATP15 (subunit epsilon, part of the central stalk), ATP16 (subunit delta, part of the central stalk), ATP17 (subunit f, part of the peripheral stalk), ATP18 (subunit i/j, part of the peripheral stalk). Dimer-specific subunits are ATP19 (subunit k, at interface between monomers), ATP20 (subunit g, at interface between monomers), TIM11 (subunit e, at interface between monomers). Also contains subunit L.

It localises to the mitochondrion inner membrane. In terms of biological role, mitochondrial membrane ATP synthase (F(1)F(0) ATP synthase or Complex V) produces ATP from ADP in the presence of a proton gradient across the membrane which is generated by electron transport complexes of the respiratory chain. F-type ATP synthases consist of two structural domains, F(1) - containing the extramembraneous catalytic core, and F(0) - containing the membrane proton channel, linked together by a central stalk and a peripheral stalk. During catalysis, ATP synthesis in the catalytic domain of F(1) is coupled via a rotary mechanism of the central stalk subunits to proton translocation. Part of the complex F(0) domain. Minor subunit located with subunit a/ATP6 in the membrane. This chain is ATP synthase protein 8, found in Pichia angusta (Yeast).